The sequence spans 297 residues: Lipoyl synthase (297 aa).

Residues C37, C42, C48, C63, C67, C70, and S276 each contribute to the [4Fe-4S] cluster site. Positions W49 to L265 constitute a Radical SAM core domain.

This sequence belongs to the radical SAM superfamily. Lipoyl synthase family. [4Fe-4S] cluster is required as a cofactor.

The protein resides in the cytoplasm. The catalysed reaction is [[Fe-S] cluster scaffold protein carrying a second [4Fe-4S](2+) cluster] + N(6)-octanoyl-L-lysyl-[protein] + 2 oxidized [2Fe-2S]-[ferredoxin] + 2 S-adenosyl-L-methionine + 4 H(+) = [[Fe-S] cluster scaffold protein] + N(6)-[(R)-dihydrolipoyl]-L-lysyl-[protein] + 4 Fe(3+) + 2 hydrogen sulfide + 2 5'-deoxyadenosine + 2 L-methionine + 2 reduced [2Fe-2S]-[ferredoxin]. The protein operates within protein modification; protein lipoylation via endogenous pathway; protein N(6)-(lipoyl)lysine from octanoyl-[acyl-carrier-protein]: step 2/2. Its function is as follows. Catalyzes the radical-mediated insertion of two sulfur atoms into the C-6 and C-8 positions of the octanoyl moiety bound to the lipoyl domains of lipoate-dependent enzymes, thereby converting the octanoylated domains into lipoylated derivatives. This is Lipoyl synthase from Rickettsia typhi (strain ATCC VR-144 / Wilmington).